We begin with the raw amino-acid sequence, 207 residues long: Neuroendocrine protein 7B2 (207 aa).

A signal peptide spans 1–22 (MVSTMLSGLVLWLTFGWTPALA). Residues cysteine 116 and cysteine 125 are joined by a disulfide bond. 2 positions are modified to phosphoserine: serine 136 and serine 200. The interval 168–207 (KGGQRRKRRSVNPYLQGQRLDNVVAKKSVPHFSDEDKDPE) is disordered.

The protein belongs to the 7B2 family. As to quaternary structure, interacts with PCSK2/PC2 early in the secretory pathway. Dissociation occurs at later stages. Post-translationally, proteolytically cleaved in the Golgi by a furin-like convertase to generate bioactive peptides. Sulfated on tyrosine residues.

It is found in the secreted. In terms of biological role, acts as a molecular chaperone for PCSK2/PC2, preventing its premature activation in the regulated secretory pathway. Binds to inactive PCSK2 in the endoplasmic reticulum and facilitates its transport from there to later compartments of the secretory pathway where it is proteolytically matured and activated. Also required for cleavage of PCSK2 but does not appear to be involved in its folding. Plays a role in regulating pituitary hormone secretion. The C-terminal peptide inhibits PCSK2 in vitro. The sequence is that of Neuroendocrine protein 7B2 (SCG5) from Sus scrofa (Pig).